The chain runs to 319 residues: Glycine--tRNA ligase alpha subunit (319 aa).

Positions 290-319 (RQQQPEAPAPGPAAVVGGRDRKDACDVKEG) are disordered. Residues 307–319 (GRDRKDACDVKEG) are compositionally biased toward basic and acidic residues.

The protein belongs to the class-II aminoacyl-tRNA synthetase family. Tetramer of two alpha and two beta subunits.

Its subcellular location is the cytoplasm. The enzyme catalyses tRNA(Gly) + glycine + ATP = glycyl-tRNA(Gly) + AMP + diphosphate. This chain is Glycine--tRNA ligase alpha subunit, found in Moorella thermoacetica (strain ATCC 39073 / JCM 9320).